The sequence spans 277 residues: Large ribosomal subunit protein uL2 (277 aa).

Disordered regions lie at residues 37–60 and 223–264; these read KNSTAGRNNNGHITTRHKGGGHKH and VVMN…NKRT. Residues 39-49 show a composition bias toward polar residues; the sequence is STAGRNNNGHI. Residues 50–60 show a composition bias toward basic residues; that stretch reads TTRHKGGGHKH. Residues 229-244 are compositionally biased toward basic and acidic residues; that stretch reads DHPHGGGEGRTGEARE.

Belongs to the universal ribosomal protein uL2 family. In terms of assembly, part of the 50S ribosomal subunit. Forms a bridge to the 30S subunit in the 70S ribosome.

Its function is as follows. One of the primary rRNA binding proteins. Required for association of the 30S and 50S subunits to form the 70S ribosome, for tRNA binding and peptide bond formation. It has been suggested to have peptidyltransferase activity; this is somewhat controversial. Makes several contacts with the 16S rRNA in the 70S ribosome. This Neisseria gonorrhoeae (strain ATCC 700825 / FA 1090) protein is Large ribosomal subunit protein uL2.